The following is a 270-amino-acid chain: MSAPCHCKHVDDSSSNDKLSALSPELQQEFKDPNHPANLICELCRLFYDNNWVTGTGGGISIRDVDGTNPNLVYIAPSGVQKERIQPWEMFLVELPDEKILRTPNDIPKELTKSYKYKPSACTPLFISCYTLRDAGACIHTHSQHAVMVTLFFENEKEFAISHIEQIKALPKLKYNDETGKIEKIGSMEYYDKLVIPIIENTPHEEDLTDSLQEAIKNYPGASAVLVRRHGIYVWGETVWKAKVYNEAIDYLLELAVKMKLAGIPLVKQE.

Cys122 contacts substrate. Residues His140 and His142 each contribute to the Zn(2+) site. Residue Glu165 is the Proton donor/acceptor of the active site. Zn(2+) is bound at residue His230.

The protein belongs to the aldolase class II family. MtnB subfamily. The cofactor is Zn(2+).

Its subcellular location is the cytoplasm. It carries out the reaction 5-(methylsulfanyl)-D-ribulose 1-phosphate = 5-methylsulfanyl-2,3-dioxopentyl phosphate + H2O. Its pathway is amino-acid biosynthesis; L-methionine biosynthesis via salvage pathway; L-methionine from S-methyl-5-thio-alpha-D-ribose 1-phosphate: step 2/6. In terms of biological role, catalyzes the dehydration of methylthioribulose-1-phosphate (MTRu-1-P) into 2,3-diketo-5-methylthiopentyl-1-phosphate (DK-MTP-1-P). The protein is Methylthioribulose-1-phosphate dehydratase of Candida albicans (strain WO-1) (Yeast).